Consider the following 674-residue polypeptide: Phosphopantothenoylcysteine decarboxylase subunit VHS3 (674 aa).

5 disordered regions span residues 1–164, 190–230, 348–368, 384–426, and 575–674; these read MTNK…SILS, LNSD…RPSV, QHNS…NITG, TSSN…SNVV, and VSAG…LQRS. Residues 15-81 show a composition bias toward polar residues; the sequence is ASNTLSGAEQ…TSGAVVSNTP (67 aa). Position 90 is a phosphothreonine (T90). The span at 106-116 shows a compositional bias: polar residues; sequence EQTPPNQVARQ. Positions 137-150 are enriched in basic and acidic residues; that stretch reads NLKDINTKVPKDGE. Residues 152-164 are compositionally biased toward polar residues; the sequence is SASSFSTPTSILS. Residues 198–212 show a composition bias toward basic and acidic residues; it reads SPRKEHPHFYVEDPL. Positions 214–230 are enriched in low complexity; it reads TPSVRSRSNSTSPRPSV. Over residues 351-368 the composition is skewed to polar residues; sequence SIDTSFNSTNSNAGNITG. A compositionally biased stretch (low complexity) spans 384–395; that stretch reads TSSNSAASQTNN. Positions 403–426 are enriched in polar residues; it reads MASTTGFPSTLGGSRTYSNSSNVV. Acidic residues predominate over residues 580 to 591; it reads EEEEDEDNDEED. Positions 592-602 are enriched in basic and acidic residues; the sequence is DNKKNDTGGKD. Over residues 603-660 the composition is skewed to acidic residues; it reads EDNDDDDDDDDDDDDDDDDDDDDDDDDDDDDDDDDDDDDDDDDDDDDDEDDEDEDEDD. Residues 661–674 show a composition bias toward basic and acidic residues; the sequence is EGKKKEDKGGLQRS.

It belongs to the HFCD (homooligomeric flavin containing Cys decarboxylase) superfamily. Interacts with the C-terminal domain of PPZ1. Component of the phosphopantothenoylcysteine decarboxylase (PPCDC) complex, a heterotrimer composed of CAB3, SIS2 and VHS3.

Its function is as follows. Component of the phosphopantothenoylcysteine decarboxylase (PPCDC) involved in the coenzyme A synthesis. Acts as an inhibitory subunit of protein phosphatase PPZ1, which is involved in many cellular processes such as G1-S transition or salt tolerance. This Saccharomyces cerevisiae (strain ATCC 204508 / S288c) (Baker's yeast) protein is Phosphopantothenoylcysteine decarboxylase subunit VHS3 (VHS3).